Here is a 436-residue protein sequence, read N- to C-terminus: 3-ketoacyl-CoA thiolase (436 aa).

The active-site Acyl-thioester intermediate is Cys99. Active-site proton acceptor residues include His392 and Cys422.

It belongs to the thiolase-like superfamily. Thiolase family. As to quaternary structure, heterotetramer of two alpha chains (FadJ) and two beta chains (FadI).

It localises to the cytoplasm. It catalyses the reaction an acyl-CoA + acetyl-CoA = a 3-oxoacyl-CoA + CoA. The protein operates within lipid metabolism; fatty acid beta-oxidation. In terms of biological role, catalyzes the final step of fatty acid oxidation in which acetyl-CoA is released and the CoA ester of a fatty acid two carbons shorter is formed. In Escherichia coli O9:H4 (strain HS), this protein is 3-ketoacyl-CoA thiolase.